A 1111-amino-acid chain; its full sequence is Receptor-type guanylate cyclase gcy-14 (1111 aa).

The signal sequence occupies residues 1-14 (MCLFLLLFPYLASG). The Extracellular segment spans residues 15–473 (QFLQTVKVGL…ECPPDFVKEY (459 aa)). Residues asparagine 65, asparagine 130, asparagine 318, asparagine 340, asparagine 365, and asparagine 379 are each glycosylated (N-linked (GlcNAc...) asparagine). A helical transmembrane segment spans residues 474 to 494 (LVYTIIAAVIVVLALLAGCAG). The Protein kinase domain maps to 482 to 817 (VIVVLALLAG…KSNLMDHVFN (336 aa)). ATP-binding positions include 488–496 (LLAGCAGLL) and lysine 545. Over 495–1111 (LLYTMQMKRK…DFNNGNECVS (617 aa)) the chain is Cytoplasmic. The 131-residue stretch at 875–1005 (TIFFSDVVQF…DAVNTASRME (131 aa)) folds into the Guanylate cyclase domain. The segment at 1061–1082 (SAQAPREKTPEPPRRQSVRSIS) is disordered. Basic and acidic residues predominate over residues 1065-1074 (PREKTPEPPR).

Belongs to the adenylyl cyclase class-4/guanylyl cyclase family. As to quaternary structure, homodimer. As to expression, expressed asymmetrically in ASEL sensory neuron.

Its subcellular location is the cell membrane. The protein resides in the cell projection. The protein localises to the cilium. It catalyses the reaction GTP = 3',5'-cyclic GMP + diphosphate. Functionally, guanylate cyclase involved in the production of the second messenger cGMP. Regulates chemotaxis responses toward Na(1+) and Li(1+) salt ions and alkaline pH in ASE left (ASEL) sensory neuron. Directly senses environmental alkalinity in ASEL neuron which probably leads to the activation of cGMP-gated cation channel tax2/tax4. The sequence is that of Receptor-type guanylate cyclase gcy-14 from Caenorhabditis elegans.